The following is a 295-amino-acid chain: MTVATAQARTAPQPLAYLKDLVLLSKPRLSGLVMITCAGGMWLAPGQIGAARAVLTVLATAVVVGAANALNCYLERDIDARMRRTRDRPLPAGRVDPFVALGLGIAAPAFAIPILSLAANGLTALLALVALLTYVLVYTPMKQRSATALFVGAVPGAIPPLMGWTSVTGGVDAGGLALFGLLFAWQLPHFLAISLYLREDYQRGGLRMFASVHGERATRLWMALTTILLLPASLALVPLGLAGTGYAITAAVLGLALSAYAISGIGREGGRWARTFFLGTLVHLTVLFVALFLSR.

The next 9 membrane-spanning stretches (helical) occupy residues 31-51 (GLVM…IGAA), 54-74 (VLTV…NCYL), 98-118 (FVAL…LSLA), 121-141 (GLTA…YTPM), 147-167 (TALF…WTSV), 173-193 (AGGL…FLAI), 220-240 (LWMA…VPLG), 245-265 (GYAI…ISGI), and 273-293 (ARTF…ALFL).

This sequence belongs to the UbiA prenyltransferase family. Protoheme IX farnesyltransferase subfamily.

Its subcellular location is the cell inner membrane. The enzyme catalyses heme b + (2E,6E)-farnesyl diphosphate + H2O = Fe(II)-heme o + diphosphate. Its pathway is porphyrin-containing compound metabolism; heme O biosynthesis; heme O from protoheme: step 1/1. Converts heme B (protoheme IX) to heme O by substitution of the vinyl group on carbon 2 of heme B porphyrin ring with a hydroxyethyl farnesyl side group. The sequence is that of Protoheme IX farnesyltransferase from Anaeromyxobacter dehalogenans (strain 2CP-C).